Here is a 340-residue protein sequence, read N- to C-terminus: Probable sugar phosphate/phosphate translocator At3g14410 (340 aa).

Transmembrane regions (helical) follow at residues 12–32 (EFVT…QIFF), 44–64 (FPYP…LCFL), 80–100 (LEIY…TLWL), 110–130 (VAFA…LGVA), 141–161 (LLIM…ELNI), 163–183 (WIGV…LIFM), 197–217 (ISLM…PWIF), 234–254 (VVLT…FLVI), 260–282 (LTIR…LLFA), and 286–305 (LTII…AAYN). The disordered stretch occupies residues 320-340 (ETPGDAESIPLVSQGNTNTER). Positions 330–340 (LVSQGNTNTER) are enriched in polar residues.

It belongs to the TPT transporter family. TPT (TC 2.A.7.9) subfamily.

It localises to the membrane. The chain is Probable sugar phosphate/phosphate translocator At3g14410 from Arabidopsis thaliana (Mouse-ear cress).